The sequence spans 137 residues: Large ribosomal subunit protein uL16 (137 aa).

Belongs to the universal ribosomal protein uL16 family. In terms of assembly, part of the 50S ribosomal subunit.

In terms of biological role, binds 23S rRNA and is also seen to make contacts with the A and possibly P site tRNAs. This is Large ribosomal subunit protein uL16 from Lactococcus lactis subsp. cremoris (strain SK11).